The sequence spans 302 residues: Sulfate adenylyltransferase subunit 2 (302 aa).

It belongs to the PAPS reductase family. CysD subfamily. Heterodimer composed of CysD, the smaller subunit, and CysN.

The catalysed reaction is sulfate + ATP + H(+) = adenosine 5'-phosphosulfate + diphosphate. Its pathway is sulfur metabolism; hydrogen sulfide biosynthesis; sulfite from sulfate: step 1/3. Functionally, with CysN forms the ATP sulfurylase (ATPS) that catalyzes the adenylation of sulfate producing adenosine 5'-phosphosulfate (APS) and diphosphate, the first enzymatic step in sulfur assimilation pathway. APS synthesis involves the formation of a high-energy phosphoric-sulfuric acid anhydride bond driven by GTP hydrolysis by CysN coupled to ATP hydrolysis by CysD. This is Sulfate adenylyltransferase subunit 2 from Baumannia cicadellinicola subsp. Homalodisca coagulata.